Reading from the N-terminus, the 289-residue chain is Ribosomal RNA small subunit methyltransferase A (289 aa).

S-adenosyl-L-methionine-binding residues include N33, V35, G60, E81, D111, and N130.

Belongs to the class I-like SAM-binding methyltransferase superfamily. rRNA adenine N(6)-methyltransferase family. RsmA subfamily.

It is found in the cytoplasm. It carries out the reaction adenosine(1518)/adenosine(1519) in 16S rRNA + 4 S-adenosyl-L-methionine = N(6)-dimethyladenosine(1518)/N(6)-dimethyladenosine(1519) in 16S rRNA + 4 S-adenosyl-L-homocysteine + 4 H(+). Its function is as follows. Specifically dimethylates two adjacent adenosines (A1518 and A1519) in the loop of a conserved hairpin near the 3'-end of 16S rRNA in the 30S particle. May play a critical role in biogenesis of 30S subunits. This is Ribosomal RNA small subunit methyltransferase A from Corynebacterium efficiens (strain DSM 44549 / YS-314 / AJ 12310 / JCM 11189 / NBRC 100395).